The chain runs to 582 residues: PCNA-interacting partner (582 aa).

Composition is skewed to polar residues over residues 471–487 (GVNS…SSGN) and 501–510 (KSSSLTGNTS). Residues 471–514 (GVNSSVGRPTIGTSSGNVHLGRSEKEKVARKSSSLTGNTSSKRK) form a disordered region.

The protein belongs to the PARI family. In terms of assembly, interacts with RAD51 and PCNA. Interacts with PARP1. Interacts with TASOR.

It is found in the cytoplasm. Its subcellular location is the nucleus. Required to suppress inappropriate homologous recombination, thereby playing a central role DNA repair and in the maintenance of genomic stability. Antagonizes homologous recombination by interfering with the formation of the RAD51-DNA homologous recombination structure. Binds single-strand DNA and poly(A) homopolymers. Positively regulate the poly(ADP-ribosyl)ation activity of PARP1; however such function may be indirect. This Bos taurus (Bovine) protein is PCNA-interacting partner (PARPBP).